The primary structure comprises 453 residues: tRNA modification GTPase MnmE (453 aa).

Residues Arg-22, Glu-79, and Lys-119 each contribute to the (6S)-5-formyl-5,6,7,8-tetrahydrofolate site. Positions 215 to 376 constitute a TrmE-type G domain; the sequence is GMKVVIAGRP…LKQHLKSLMG (162 aa). Asn-225 serves as a coordination point for K(+). Residues 225–230, 244–250, 269–272, and 334–337 each bind GTP; these read NAGKSS, TEIAGTT, DTAG, and NKAD. Ser-229 is a Mg(2+) binding site. The K(+) site is built by Thr-244, Ile-246, and Thr-249. Thr-250 provides a ligand contact to Mg(2+). Lys-453 provides a ligand contact to (6S)-5-formyl-5,6,7,8-tetrahydrofolate.

This sequence belongs to the TRAFAC class TrmE-Era-EngA-EngB-Septin-like GTPase superfamily. TrmE GTPase family. As to quaternary structure, homodimer. Heterotetramer of two MnmE and two MnmG subunits. The cofactor is K(+).

The protein localises to the cytoplasm. Its function is as follows. Exhibits a very high intrinsic GTPase hydrolysis rate. Involved in the addition of a carboxymethylaminomethyl (cmnm) group at the wobble position (U34) of certain tRNAs, forming tRNA-cmnm(5)s(2)U34. The polypeptide is tRNA modification GTPase MnmE (Shewanella denitrificans (strain OS217 / ATCC BAA-1090 / DSM 15013)).